The chain runs to 196 residues: ATP-dependent Clp protease proteolytic subunit (196 aa).

S101 serves as the catalytic Nucleophile. Residue H126 is part of the active site.

The protein belongs to the peptidase S14 family. In terms of assembly, component of the chloroplastic Clp protease core complex.

The protein localises to the plastid. Its subcellular location is the chloroplast stroma. The enzyme catalyses Hydrolysis of proteins to small peptides in the presence of ATP and magnesium. alpha-casein is the usual test substrate. In the absence of ATP, only oligopeptides shorter than five residues are hydrolyzed (such as succinyl-Leu-Tyr-|-NHMec, and Leu-Tyr-Leu-|-Tyr-Trp, in which cleavage of the -Tyr-|-Leu- and -Tyr-|-Trp bonds also occurs).. Its function is as follows. Cleaves peptides in various proteins in a process that requires ATP hydrolysis. Has a chymotrypsin-like activity. Plays a major role in the degradation of misfolded proteins. The sequence is that of ATP-dependent Clp protease proteolytic subunit from Arabis hirsuta (Hairy rock-cress).